A 427-amino-acid polypeptide reads, in one-letter code: Enolase (427 aa).

Position 163 (Gln-163) interacts with (2R)-2-phosphoglycerate. The active-site Proton donor is the Glu-205. Mg(2+)-binding residues include Asp-242, Glu-285, and Asp-312. Residues Lys-337, Arg-366, Ser-367, and Lys-388 each coordinate (2R)-2-phosphoglycerate. Lys-337 (proton acceptor) is an active-site residue.

This sequence belongs to the enolase family. It depends on Mg(2+) as a cofactor.

The protein resides in the cytoplasm. Its subcellular location is the secreted. It localises to the cell surface. The enzyme catalyses (2R)-2-phosphoglycerate = phosphoenolpyruvate + H2O. Its pathway is carbohydrate degradation; glycolysis; pyruvate from D-glyceraldehyde 3-phosphate: step 4/5. In terms of biological role, catalyzes the reversible conversion of 2-phosphoglycerate (2-PG) into phosphoenolpyruvate (PEP). It is essential for the degradation of carbohydrates via glycolysis. This Burkholderia lata (strain ATCC 17760 / DSM 23089 / LMG 22485 / NCIMB 9086 / R18194 / 383) protein is Enolase.